The primary structure comprises 222 residues: UPF0758 protein YicR (222 aa).

Positions 100–222 (PLLSPEMTRE…YVSFAERGWI (123 aa)) constitute an MPN domain. Residues histidine 171, histidine 173, and aspartate 184 each contribute to the Zn(2+) site. The JAMM motif motif lies at 171 to 184 (HNHPSGCAEPSKAD).

The protein belongs to the UPF0758 family. YicR subfamily.

This Escherichia coli O9:H4 (strain HS) protein is UPF0758 protein YicR.